The primary structure comprises 320 residues: Aminoacyl tRNA synthase complex-interacting multifunctional protein 2 (320 aa).

S36 bears the Phosphoserine mark. An interaction with PRKN region spans residues 82–162 (TPDADLDVTN…HTHSAVRSVP (81 aa)). Residues 162–225 (PANLLQCFGE…FLFSLFGQKQ (64 aa)) are interaction with TP53. One can recognise a GST C-terminal domain in the interval 220 to 317 (LFGQKQDAVN…NLAPFHTALK (98 aa)).

Part of the multisynthetase complex (MSC), a multisubunit complex that groups tRNA ligases for Arg (RARS1), Asp (DARS1), Gln (QARS1), Ile (IARS1), Leu (LARS1), Lys (KARS1), Met (MARS1) the bifunctional ligase for Glu and Pro (EPRS1) and the auxiliary subunits AIMP1/p43, AIMP2/p38 and EEF1E1/p18. Interacts (via N-terminus) with KARS1. Interacts with EPRS1. Forms a linear complex that contains MARS1, EEF1E1, EPRS1 and AIMP2 that is at the core of the multisubunit complex. Binds FUBP1 (via C-terminus). Interacts in both its unphosphorylated and phosphorylated forms with p53/TP53 (via N-terminus) in the nucleus following UV irradiation. Interacts (via N-terminus) with PRKN/parkin (via first RING-type domain). Interacts with TARS3. In terms of processing, phosphorylated on serine residues in response to UV irradiation. Ubiquitinated by PRKN, leading to its degradation by the proteasome.

The protein resides in the cytoplasm. It is found in the cytosol. The protein localises to the nucleus. Functionally, required for assembly and stability of the aminoacyl-tRNA synthase complex. Mediates ubiquitination and degradation of FUBP1, a transcriptional activator of MYC, leading to MYC down-regulation which is required for aveolar type II cell differentiation. Blocks MDM2-mediated ubiquitination and degradation of p53/TP53. Functions as a proapoptotic factor. In Bos taurus (Bovine), this protein is Aminoacyl tRNA synthase complex-interacting multifunctional protein 2 (AIMP2).